We begin with the raw amino-acid sequence, 103 residues long: Putative double-stranded DNA mimic protein APJL_1366 (103 aa).

The protein belongs to the putative dsDNA mimic protein family.

May act as a double-stranded DNA (dsDNA) mimic. Probably regulates the activity of a dsDNA-binding protein. The polypeptide is Putative double-stranded DNA mimic protein APJL_1366 (Actinobacillus pleuropneumoniae serotype 3 (strain JL03)).